Consider the following 689-residue polypeptide: DNA ligase (689 aa).

NAD(+) is bound by residues 40 to 44 (DSEYD), 89 to 90 (SL), and Glu121. Lys123 acts as the N6-AMP-lysine intermediate in catalysis. Residues Arg144, Glu179, Lys295, and Lys319 each contribute to the NAD(+) site. Residues Cys413, Cys416, Cys431, and Cys437 each coordinate Zn(2+). The BRCT domain maps to 610-689 (REQSSLTDKI…EEWLTLIKNV (80 aa)).

Belongs to the NAD-dependent DNA ligase family. LigA subfamily. Requires Mg(2+) as cofactor. The cofactor is Mn(2+).

The catalysed reaction is NAD(+) + (deoxyribonucleotide)n-3'-hydroxyl + 5'-phospho-(deoxyribonucleotide)m = (deoxyribonucleotide)n+m + AMP + beta-nicotinamide D-nucleotide.. Functionally, DNA ligase that catalyzes the formation of phosphodiester linkages between 5'-phosphoryl and 3'-hydroxyl groups in double-stranded DNA using NAD as a coenzyme and as the energy source for the reaction. It is essential for DNA replication and repair of damaged DNA. The chain is DNA ligase from Rickettsia africae (strain ESF-5).